Consider the following 489-residue polypeptide: Long chain base biosynthesis protein 2d (489 aa).

The helical transmembrane segment at 4 to 24 threads the bilayer; the sequence is LPYVTALTTLFSYGLLFAFGQ. N6-(pyridoxal phosphate)lysine is present on K311.

Belongs to the class-II pyridoxal-phosphate-dependent aminotransferase family. Heterodimer with LCB1. Component of the serine palmitoyltransferase (SPT) complex, composed of LCB1 and LCB2. It depends on pyridoxal 5'-phosphate as a cofactor.

The protein localises to the endoplasmic reticulum membrane. The enzyme catalyses L-serine + hexadecanoyl-CoA + H(+) = 3-oxosphinganine + CO2 + CoA. The protein operates within lipid metabolism; sphingolipid metabolism. In terms of biological role, serine palmitoyltransferase (SPT). The heterodimer formed with LCB1 constitutes the catalytic core. The chain is Long chain base biosynthesis protein 2d from Oryza sativa subsp. japonica (Rice).